A 427-amino-acid polypeptide reads, in one-letter code: Glutamate-1-semialdehyde 2,1-aminomutase (427 aa).

Position 265 is an N6-(pyridoxal phosphate)lysine (K265).

It belongs to the class-III pyridoxal-phosphate-dependent aminotransferase family. HemL subfamily. Homodimer. Requires pyridoxal 5'-phosphate as cofactor.

The protein resides in the cytoplasm. The catalysed reaction is (S)-4-amino-5-oxopentanoate = 5-aminolevulinate. The protein operates within porphyrin-containing compound metabolism; protoporphyrin-IX biosynthesis; 5-aminolevulinate from L-glutamyl-tRNA(Glu): step 2/2. In Pseudomonas aeruginosa (strain UCBPP-PA14), this protein is Glutamate-1-semialdehyde 2,1-aminomutase.